Consider the following 627-residue polypeptide: Sister chromatid cohesion 1 protein 1 (627 aa).

Disordered stretches follow at residues 211–294 (GDDE…TATS), 395–416 (MHNH…NLDS), and 461–510 (GDDV…VAEE). Composition is skewed to basic and acidic residues over residues 254 to 263 (EQQENRRDGF), 272 to 282 (IPDKEEHDRPQ), and 395 to 408 (MHNH…ERSD). Residues 467–487 (MPSTPSARGAASINNIEISSK) are compositionally biased toward polar residues.

The protein belongs to the rad21 family. As to quaternary structure, component of the cohesin complex. As to expression, isoform 2 is expressed at low levels in buds, leaves and roots, whereas expression of isoform 1 is confined to buds.

The protein localises to the nucleus. Its function is as follows. Involved in chromosome condensation, pairing and segregation during meiosis. Responsible for cohesion between replicated sister chromatids. This chain is Sister chromatid cohesion 1 protein 1 (SYN1), found in Arabidopsis thaliana (Mouse-ear cress).